The sequence spans 271 residues: Tryptophan synthase alpha chain (271 aa).

Residues Glu49 and Asp60 each act as proton acceptor in the active site.

Belongs to the TrpA family. As to quaternary structure, tetramer of two alpha and two beta chains.

It carries out the reaction (1S,2R)-1-C-(indol-3-yl)glycerol 3-phosphate + L-serine = D-glyceraldehyde 3-phosphate + L-tryptophan + H2O. It participates in amino-acid biosynthesis; L-tryptophan biosynthesis; L-tryptophan from chorismate: step 5/5. Functionally, the alpha subunit is responsible for the aldol cleavage of indoleglycerol phosphate to indole and glyceraldehyde 3-phosphate. The chain is Tryptophan synthase alpha chain from Burkholderia cenocepacia (strain HI2424).